The following is a 380-amino-acid chain: Lipid-A-disaccharide synthase (380 aa).

This sequence belongs to the LpxB family.

The enzyme catalyses a lipid X + a UDP-2-N,3-O-bis[(3R)-3-hydroxyacyl]-alpha-D-glucosamine = a lipid A disaccharide + UDP + H(+). The protein operates within bacterial outer membrane biogenesis; LPS lipid A biosynthesis. In terms of biological role, condensation of UDP-2,3-diacylglucosamine and 2,3-diacylglucosamine-1-phosphate to form lipid A disaccharide, a precursor of lipid A, a phosphorylated glycolipid that anchors the lipopolysaccharide to the outer membrane of the cell. This is Lipid-A-disaccharide synthase from Rickettsia typhi (strain ATCC VR-144 / Wilmington).